The primary structure comprises 1045 residues: Putative sodium-coupled neutral amino acid transporter 10 (1045 aa).

Helical transmembrane passes span 8–28, 33–53, 85–105, 117–137, 150–170, 226–246, 269–289, 320–340, 342–362, and 375–395; these read LIMN…PFCF, ILLG…SCMF, SMIG…GDLG, VSEG…VLPL, FSAM…LSSF, IFAL…FFGY, MIRV…ILPC, ILTL…PNVE, ILGL…PALI, and FILG…LTVT. Basic and acidic residues-rich tracts occupy residues 412-453, 460-479, and 503-546; these read KEEK…EEQI, PQKE…RPDQ, and VDEK…DQAE. Disordered stretches follow at residues 412–584 and 606–658; these read KEEK…EQPP and EIAE…AEAG. Residues 564-573 show a composition bias toward polar residues; that stretch reads NDPNKQQLVN. Over residues 627–658 the composition is skewed to basic and acidic residues; sequence PIKDEKNEQIPGDPGKESHVEPKAEDNQAEAG.

The protein belongs to the amino acid/polyamine transporter 2 family.

The protein resides in the membrane. Functionally, putative sodium-dependent amino acid/proton antiporter. This chain is Putative sodium-coupled neutral amino acid transporter 10 (slc38a10), found in Xenopus laevis (African clawed frog).